Consider the following 209-residue polypeptide: Large ribosomal subunit protein uL3 (209 aa).

The disordered stretch occupies residues 128-156 (FAGGSRTHGQSDRLRAPGSVGGSSDPSRT).

The protein belongs to the universal ribosomal protein uL3 family. In terms of assembly, part of the 50S ribosomal subunit. Forms a cluster with proteins L14 and L19.

One of the primary rRNA binding proteins, it binds directly near the 3'-end of the 23S rRNA, where it nucleates assembly of the 50S subunit. The sequence is that of Large ribosomal subunit protein uL3 from Prosthecochloris aestuarii (strain DSM 271 / SK 413).